The primary structure comprises 71 residues: Small ribosomal subunit protein bS21 (71 aa).

Residues 38-71 are disordered; the sequence is YEKPTTVRKRAKAAAQKRHAKKLSRENARRVRLY. Over residues 43-59 the composition is skewed to basic residues; that stretch reads TVRKRAKAAAQKRHAKK. Basic and acidic residues predominate over residues 60 to 71; that stretch reads LSRENARRVRLY.

It belongs to the bacterial ribosomal protein bS21 family.

The protein is Small ribosomal subunit protein bS21 of Aliivibrio fischeri (strain ATCC 700601 / ES114) (Vibrio fischeri).